Consider the following 289-residue polypeptide: ATP synthase gamma chain (289 aa).

This sequence belongs to the ATPase gamma chain family. In terms of assembly, F-type ATPases have 2 components, CF(1) - the catalytic core - and CF(0) - the membrane proton channel. CF(1) has five subunits: alpha(3), beta(3), gamma(1), delta(1), epsilon(1). CF(0) has three main subunits: a, b and c.

The protein resides in the cell membrane. In terms of biological role, produces ATP from ADP in the presence of a proton gradient across the membrane. The gamma chain is believed to be important in regulating ATPase activity and the flow of protons through the CF(0) complex. This Lawsonia intracellularis (strain PHE/MN1-00) protein is ATP synthase gamma chain.